The primary structure comprises 380 residues: Tryptophan 2,3-dioxygenase (380 aa).

Substrate is bound by residues 57–61 (FIITH) and R128. H313 lines the heme pocket. Residue T328 participates in substrate binding.

The protein belongs to the tryptophan 2,3-dioxygenase family. As to quaternary structure, homotetramer. Dimer of dimers. Requires heme as cofactor.

It carries out the reaction L-tryptophan + O2 = N-formyl-L-kynurenine. Its pathway is amino-acid degradation; L-tryptophan degradation via kynurenine pathway; L-kynurenine from L-tryptophan: step 1/2. It functions in the pathway pigment biosynthesis; ommochrome biosynthesis. Its function is as follows. Heme-dependent dioxygenase that catalyzes the oxidative cleavage of the L-tryptophan (L-Trp) pyrrole ring and converts L-tryptophan to N-formyl-L-kynurenine. Catalyzes the oxidative cleavage of the indole moiety. The chain is Tryptophan 2,3-dioxygenase from Drosophila willistoni (Fruit fly).